The primary structure comprises 119 residues: MRQNQLIEKVTAGQLRSDIPAFRAGDTVRVHALIVEGTRERVQIFEGVVIKRHGAGISATYTVRKISNGIGVERTFPLHSPRVEKIEVVRYGRVRRAKLYYLRERTGKSARIAERRRDK.

The protein belongs to the bacterial ribosomal protein bL19 family.

Its function is as follows. This protein is located at the 30S-50S ribosomal subunit interface and may play a role in the structure and function of the aminoacyl-tRNA binding site. In Limosilactobacillus fermentum (strain NBRC 3956 / LMG 18251) (Lactobacillus fermentum), this protein is Large ribosomal subunit protein bL19.